We begin with the raw amino-acid sequence, 128 residues long: Nanos homolog 1 (128 aa).

The essential for its translational repressor activity stretch occupies residues Phe7–Gly23. The segment at Gly23–Arg56 is disordered. A Nanos-type zinc finger spans residues Gly60 to Leu114. Cys61, Cys64, His77, Cys88, Cys96, Cys99, His107, and Cys112 together coordinate Zn(2+). Short sequence motifs (C2HC) lie at residues Cys61–Cys88 and Cys96–Cys112.

The protein belongs to the nanos family. Interacts with ccnb1.

Its subcellular location is the cytoplasm. The protein localises to the perinuclear region. In terms of biological role, acts as a translational repressor. Can mediate repression affecting different steps in the translation process: cap-driven, IRES-driven, polyadenylated RNAs or nonpolyadenylated RNAs. Essential for the development of primordial germ cells (PGCs) by ensuring their proper migration and survival. This is Nanos homolog 1 (nanos1) from Xenopus borealis (Kenyan clawed frog).